We begin with the raw amino-acid sequence, 499 residues long: Cytochrome P450 76T24 (499 aa).

A helical transmembrane segment spans residues 3 to 23 (VDILLSLVLAFFGWAAIYFLT). N-linked (GlcNAc...) asparagine glycosylation is found at Asn55, Asn76, Asn279, and Asn284. Cys442 provides a ligand contact to heme.

It belongs to the cytochrome P450 family.

It localises to the membrane. This chain is Cytochrome P450 76T24, found in Catharanthus roseus (Madagascar periwinkle).